A 226-amino-acid chain; its full sequence is Transcriptional activator plp-1 (226 aa).

Belongs to the PUR DNA-binding protein family.

It is found in the nucleus. The protein resides in the chromosome. Its function is as follows. Probable transcription activator. Binds telomeric DNA containing repeats of the sequence, 5'-TTAGGC-3'. Binds to end-1 promoter, activating end-1 expression, which is required for endoderm specification during embryonic development. The chain is Transcriptional activator plp-1 from Caenorhabditis elegans.